Reading from the N-terminus, the 699-residue chain is MKQRFSALQLLKLLLLLQPPLPRALREALCPEPCNCVPDGALRCPGPTAGLTRLSLAYLPVKVIPSQAFRGLNEVIKIEISQIDSLERIEANAFDNLLNLSEILIQNTKNLRYIEPGAFINLPRLKYLSICNTGIRKFPDVTKVFSSESNFILEICDNLHITTIPGNAFQGMNNESVTLKLYGNGFEEVQSHAFNGTTLTSLELKENVHLEKMHNGAFRGATGPKTLDISSTKLQALPSYGLESIQRLIATSSYSLKKLPSRETFVNLLEATLTYPSHCCAFRNLPTKEQNFSHSISENFSKQCESTVRKVNNKTLYSSMLAESELSGWDYEYGFCLPKTPRCAPEPDAFNPCEDIMGYDFLRVLIWLINILAIMGNMTVLFVLLTSRYKLTVPRFLMCNLSFADFCMGLYLLLIASVDSQTKGQYYNHAIDWQTGSGCSTAGFFTVFASELSVYTLTVITLERWHTITYAIHLDQKLRLRHAILIMLGGWLFSSLIAMLPLVGVSNYMKVSICFPMDVETTLSQVYILTILILNVVAFFIICACYIKIYFAVRNPELMATNKDTKIAKKMAILIFTDFTCMAPISFFAISAAFKVPLITVTNSKVLLVLFYPINSCANPFLYAIFTKTFQRDFFLLLSKFGCCKRRAELYRRKDFSAYTSNCKNGFTGSNKPSQSTLKLSTLHCQGTALLDKTRYTEC.

Residues Met-1–Arg-26 form the signal peptide. In terms of domain architecture, LRRNT spans Glu-27 to Ser-66. Topologically, residues Glu-27–Arg-363 are extracellular. LRR repeat units lie at residues Asn-96 to Glu-115, Arg-124 to Phe-145, and Ser-149 to Gly-171. The N-linked (GlcNAc...) asparagine glycan is linked to Asn-99. Residues Asn-174 and Asn-195 are each glycosylated (N-linked (GlcNAc...) asparagine). LRR repeat units follow at residues Glu-175–Gly-196, Thr-198–Gly-220, and Gly-223–Ser-244. N-linked (GlcNAc...) asparagine glycosylation is found at Asn-291, Asn-299, and Asn-313. A Sulfotyrosine modification is found at Tyr-331. The helical transmembrane segment at Val-364–Leu-385 threads the bilayer. Topologically, residues Thr-386–Arg-395 are cytoplasmic. Residues Phe-396–Ala-416 traverse the membrane as a helical segment. Topologically, residues Ser-417 to Cys-439 are extracellular. Cysteines 439 and 514 form a disulfide. A helical transmembrane segment spans residues Ser-440 to Leu-462. Residues Glu-463 to His-482 are Cytoplasmic-facing. A helical membrane pass occupies residues Ala-483–Val-505. Over Ser-506–Gln-525 the chain is Extracellular. Residues Val-526–Ile-549 traverse the membrane as a helical segment. At Tyr-550–Lys-570 the chain is on the cytoplasmic side. The chain crosses the membrane as a helical span at residues Met-571–Phe-594. The Extracellular portion of the chain corresponds to Lys-595–Lys-605. The chain crosses the membrane as a helical span at residues Val-606–Thr-627. The Cytoplasmic portion of the chain corresponds to Lys-628–Cys-699. 2 S-palmitoyl cysteine lipidation sites follow: Cys-643 and Cys-644.

This sequence belongs to the G-protein coupled receptor 1 family. FSH/LSH/TSH subfamily. Post-translationally, sulfated. As to expression, gonadal and thyroid cells.

Its subcellular location is the cell membrane. In terms of biological role, receptor for lutropin-choriogonadotropic hormone. The activity of this receptor is mediated by G proteins which activate adenylate cyclase. This is Lutropin-choriogonadotropic hormone receptor (LHCGR) from Homo sapiens (Human).